The following is an 87-amino-acid chain: Apolipoprotein C-I (87 aa).

Positions 1-26 are cleaved as a signal peptide; sequence MRLILSLPVLAVVLAMVLEGPAPAQA.

The protein belongs to the apolipoprotein C1 family.

The protein resides in the secreted. In terms of biological role, inhibitor of lipoprotein binding to the low density lipoprotein (LDL) receptor, LDL receptor-related protein, and very low density lipoprotein (VLDL) receptor. Associates with high density lipoproteins (HDL) and the triacylglycerol-rich lipoproteins in the plasma and makes up about 10% of the protein of the VLDL and 2% of that of HDL. Appears to interfere directly with fatty acid uptake and is also the major plasma inhibitor of cholesteryl ester transfer protein (CETP). Binds free fatty acids and reduces their intracellular esterification. Modulates the interaction of APOE with beta-migrating VLDL and inhibits binding of beta-VLDL to the LDL receptor-related protein. The polypeptide is Apolipoprotein C-I (APOC1) (Pteropus vampyrus (Large flying fox)).